Consider the following 364-residue polypeptide: tRNA 2-selenouridine synthase (364 aa).

Residues 14-137 (LLADTPLIDV…LRQTAIQATW (124 aa)) enclose the Rhodanese domain. Cys-97 functions as the S-selanylcysteine intermediate in the catalytic mechanism.

Belongs to the SelU family. As to quaternary structure, monomer.

The enzyme catalyses 5-methylaminomethyl-2-thiouridine(34) in tRNA + selenophosphate + (2E)-geranyl diphosphate + H2O + H(+) = 5-methylaminomethyl-2-selenouridine(34) in tRNA + (2E)-thiogeraniol + phosphate + diphosphate. It carries out the reaction 5-methylaminomethyl-2-thiouridine(34) in tRNA + (2E)-geranyl diphosphate = 5-methylaminomethyl-S-(2E)-geranyl-thiouridine(34) in tRNA + diphosphate. It catalyses the reaction 5-methylaminomethyl-S-(2E)-geranyl-thiouridine(34) in tRNA + selenophosphate + H(+) = 5-methylaminomethyl-2-(Se-phospho)selenouridine(34) in tRNA + (2E)-thiogeraniol. The catalysed reaction is 5-methylaminomethyl-2-(Se-phospho)selenouridine(34) in tRNA + H2O = 5-methylaminomethyl-2-selenouridine(34) in tRNA + phosphate. Functionally, involved in the post-transcriptional modification of the uridine at the wobble position (U34) of tRNA(Lys), tRNA(Glu) and tRNA(Gln). Catalyzes the conversion of 2-thiouridine (S2U-RNA) to 2-selenouridine (Se2U-RNA). Acts in a two-step process involving geranylation of 2-thiouridine (S2U) to S-geranyl-2-thiouridine (geS2U) and subsequent selenation of the latter derivative to 2-selenouridine (Se2U) in the tRNA chain. This chain is tRNA 2-selenouridine synthase, found in Salmonella enteritidis PT4 (strain P125109).